The following is a 361-amino-acid chain: Phospho-N-acetylmuramoyl-pentapeptide-transferase (361 aa).

The next 10 membrane-spanning stretches (helical) occupy residues 25–45 (RGIL…PAVI), 73–93 (TMGG…WGDL), 98–118 (VWLV…DDWI), 139–159 (IFGL…AAIT), 168–188 (IALP…IVGF), 200–220 (GLAI…AYAS), 237–257 (AGEL…FLWF), 264–284 (VFMG…IAVI), 289–309 (MVLV…IIQV), and 339–359 (VIVR…ATLK).

The protein belongs to the glycosyltransferase 4 family. MraY subfamily. The cofactor is Mg(2+).

Its subcellular location is the cell inner membrane. The enzyme catalyses UDP-N-acetyl-alpha-D-muramoyl-L-alanyl-gamma-D-glutamyl-meso-2,6-diaminopimeloyl-D-alanyl-D-alanine + di-trans,octa-cis-undecaprenyl phosphate = di-trans,octa-cis-undecaprenyl diphospho-N-acetyl-alpha-D-muramoyl-L-alanyl-D-glutamyl-meso-2,6-diaminopimeloyl-D-alanyl-D-alanine + UMP. It functions in the pathway cell wall biogenesis; peptidoglycan biosynthesis. Functionally, catalyzes the initial step of the lipid cycle reactions in the biosynthesis of the cell wall peptidoglycan: transfers peptidoglycan precursor phospho-MurNAc-pentapeptide from UDP-MurNAc-pentapeptide onto the lipid carrier undecaprenyl phosphate, yielding undecaprenyl-pyrophosphoryl-MurNAc-pentapeptide, known as lipid I. The protein is Phospho-N-acetylmuramoyl-pentapeptide-transferase of Xanthomonas oryzae pv. oryzae (strain PXO99A).